A 536-amino-acid polypeptide reads, in one-letter code: Probable serine/threonine-protein kinase DDB_G0268550 (536 aa).

A Protein kinase domain is found at 14–305 (EIIEKNYRKG…IDVLEIHPFL (292 aa)). ATP contacts are provided by residues 20 to 28 (YRKGGFSKI) and Lys-51. Asp-147 serves as the catalytic Proton acceptor. The interval 161-192 (DNNNNNNNNNNNNNNNNNNNSNINDDNNNSNS) is disordered.

It belongs to the protein kinase superfamily. Ser/Thr protein kinase family. Mg(2+) is required as a cofactor.

It carries out the reaction L-seryl-[protein] + ATP = O-phospho-L-seryl-[protein] + ADP + H(+). The catalysed reaction is L-threonyl-[protein] + ATP = O-phospho-L-threonyl-[protein] + ADP + H(+). The sequence is that of Probable serine/threonine-protein kinase DDB_G0268550 from Dictyostelium discoideum (Social amoeba).